Here is a 637-residue protein sequence, read N- to C-terminus: 3D-(3,5/4)-trihydroxycyclohexane-1,2-dione hydrolase (637 aa).

Glutamate 66 lines the thiamine diphosphate pocket. The tract at residues serine 442–glycine 522 is thiamine pyrophosphate binding. Aspartate 493 and asparagine 520 together coordinate Mg(2+).

The protein belongs to the TPP enzyme family. Mg(2+) is required as a cofactor. It depends on thiamine diphosphate as a cofactor.

It catalyses the reaction 3D-3,5/4-trihydroxycyclohexane-1,2-dione + H2O = 5-deoxy-D-glucuronate + H(+). Its pathway is polyol metabolism; myo-inositol degradation into acetyl-CoA; acetyl-CoA from myo-inositol: step 3/7. Its function is as follows. Involved in the cleavage of the C1-C2 bond of 3D-(3,5/4)-trihydroxycyclohexane-1,2-dione (THcHDO) to yield 5-deoxy-glucuronate (5DG). The chain is 3D-(3,5/4)-trihydroxycyclohexane-1,2-dione hydrolase (iolD) from Bacillus subtilis (strain 168).